The primary structure comprises 416 residues: Sarcosine oxidase subunit beta (416 aa).

Residues Gly-41, His-42, Glu-63, Asn-71, Thr-76, and Ile-78 each coordinate FAD. Tele-8alpha-FMN histidine is present on His-182. FAD contacts are provided by Val-206, Gly-366, and Lys-368.

Belongs to the SoxB family. In terms of assembly, heterotetramer composed of subunits alpha (SoxA), beta (SoxB), gamma (SoxG) and delta (SoxD). FAD serves as cofactor. It depends on FMN as a cofactor.

It is found in the cytoplasm. The catalysed reaction is sarcosine + (6S)-5,6,7,8-tetrahydrofolate + O2 = (6R)-5,10-methylene-5,6,7,8-tetrahydrofolate + glycine + H2O2. The enzyme catalyses sarcosine + O2 + H2O = formaldehyde + glycine + H2O2. In the presence of tetrahydrofolate, catalyzes the oxidative demethylation of sarcosine to yield glycine, 5,10-methylenetetrahydrofolate and hydrogen peroxide. In the absence of tetrahydrofolate, catalyzes the oxidative demethylation of sarcosine to yield glycine, formaldehyde and hydrogen peroxide. The polypeptide is Sarcosine oxidase subunit beta (soxB) (Rhizobium meliloti (strain 1021) (Ensifer meliloti)).